Here is a 464-residue protein sequence, read N- to C-terminus: ERO1-like protein alpha (464 aa).

The first 23 residues, 1-23 (MGRAWGLLVGLLGVVWLLRLGHG), serve as a signal peptide directing secretion. 8 disulfides stabilise this stretch: Cys35/Cys48, Cys37/Cys46, Cys85/Cys387, Cys94/Cys99, Cys94/Cys130, Cys99/Cys104, Cys207/Cys237, and Cys390/Cys393. Phosphoserine is present on residues Ser106, Ser142, and Ser144. Arg186, Thr188, and Trp199 together coordinate FAD. 2 residues coordinate FAD: Ser248 and His251. A glycan (N-linked (GlcNAc...) asparagine) is linked at Asn276. Arg283 and Arg296 together coordinate FAD. Asn380 is a glycosylation site (N-linked (GlcNAc...) asparagine).

The protein belongs to the EROs family. Predominantly monomer. May function both as a monomer and a homodimer. Interacts with PDILT. Interacts with ERP44; the interaction results in retention of ERO1A in the endoplasmic reticulum. It depends on FAD as a cofactor. N-glycosylated. Post-translationally, the Cys-94/Cys-99 and Cys-390/Cys-393 disulfide bonds constitute the redox-active center. The Cys-94/Cys-99 disulfide bond may accept electron from P4HB and funnel them to the active site disulfide Cys-390/Cys-393. The regulatory Cys-99/Cys-104 disulfide bond stabilizes the other regulatory bond Cys-94/Cys-130. In terms of processing, phosphorylated on Ser-144 by FAM20C in the Golgi which increases its enzymatic activity. Phosphorylation is induced by lactation. It is also induced by hypoxia and reductive stress. In terms of tissue distribution, widely expressed (at protein level). In the mammary gland, expressed at higher levels in lactating mice than in virgin mice (at protein level).

The protein localises to the endoplasmic reticulum membrane. It is found in the golgi apparatus lumen. It localises to the secreted. Its subcellular location is the cell projection. The protein resides in the dendrite. Enzyme activity is tightly regulated to prevent the accumulation of reactive oxygen species in the endoplasmic reticulum. Reversibly down-regulated by the formation of disulfide bonds between the active site Cys-94 and Cys-130, and between Cys-99 and Cys-104. Glutathione may be required to regulate its activity in the endoplasmic reticulum. Functionally, oxidoreductase involved in disulfide bond formation in the endoplasmic reticulum. Efficiently reoxidizes P4HB/PDI, the enzyme catalyzing protein disulfide formation, in order to allow P4HB to sustain additional rounds of disulfide formation. Following P4HB reoxidation, passes its electrons to molecular oxygen via FAD, leading to the production of reactive oxygen species (ROS) in the cell. Required for the proper folding of immunoglobulins. Plays an important role in ER stress-induced, CHOP-dependent apoptosis by activating the inositol 1,4,5-trisphosphate receptor IP3R1. The protein is ERO1-like protein alpha of Mus musculus (Mouse).